The sequence spans 490 residues: Asparagine--tRNA ligase (490 aa).

This sequence belongs to the class-II aminoacyl-tRNA synthetase family. In terms of assembly, homodimer.

Its subcellular location is the cytoplasm. It carries out the reaction tRNA(Asn) + L-asparagine + ATP = L-asparaginyl-tRNA(Asn) + AMP + diphosphate + H(+). The protein is Asparagine--tRNA ligase of Rhodopirellula baltica (strain DSM 10527 / NCIMB 13988 / SH1).